The following is a 515-amino-acid chain: Folate synthesis bifunctional protein, mitochondrial (515 aa).

Residues 1–28 (MSILKCLGVRGNQLCAARNYLKVLGFSS) constitute a mitochondrion transit peptide. The segment at 47–172 (VIALGSNVGD…PFVMAPLMDL (126 aa)) is HPPK. In terms of domain architecture, Pterin-binding spans 230–498 (TLVMGILNLT…NVKDNLDAVK (269 aa)). Residues 232-515 (VMGILNLTPD…QKSSPIKFKQ (284 aa)) form a DHPS region. A Mg(2+)-binding site is contributed by N237. (7,8-dihydropterin-6-yl)methyl diphosphate is bound by residues T277, D314, N333, D406, K451, and 486 to 488 (RVH).

In the N-terminal section; belongs to the HPPK family. This sequence in the C-terminal section; belongs to the DHPS family. Homomultimer. Mg(2+) serves as cofactor.

The protein resides in the mitochondrion. It catalyses the reaction 6-hydroxymethyl-7,8-dihydropterin + ATP = (7,8-dihydropterin-6-yl)methyl diphosphate + AMP + H(+). It carries out the reaction (7,8-dihydropterin-6-yl)methyl diphosphate + 4-aminobenzoate = 7,8-dihydropteroate + diphosphate. It participates in cofactor biosynthesis; tetrahydrofolate biosynthesis; 2-amino-4-hydroxy-6-hydroxymethyl-7,8-dihydropteridine diphosphate from 7,8-dihydroneopterin triphosphate: step 4/4. It functions in the pathway cofactor biosynthesis; tetrahydrofolate biosynthesis; 7,8-dihydrofolate from 2-amino-4-hydroxy-6-hydroxymethyl-7,8-dihydropteridine diphosphate and 4-aminobenzoate: step 1/2. In terms of biological role, catalyzes the first two consecutive steps of tetrahydrofolate biosynthesis. The sequence is that of Folate synthesis bifunctional protein, mitochondrial from Pisum sativum (Garden pea).